We begin with the raw amino-acid sequence, 444 residues long: MQPIEEVSQDTMAFVVAPGGALRGRLRVPGDKSISHRAIILGALAEGITQITGFLEGEDTLATLQAFRDLGVSIEGPEGGRVKIHGVSLQGLRAPEKPLYLGNSGTSVRLLAGLFAGQSFDVILRGDESLSRRPMRRVCDPLARMGAFIETTAQGTPPLHIHGGQSLYGIEYAMPMASAQVKSSLLLAGLYASGRTCVVEPAPTRDHSERMLAGFGYPVEREGAKVCIQGGGTLHGTVVEIPADISSAAFFMVGAAIGKGSDILLEHVGINPTRTGIIDILRRMGAEIEIRETGVVGGEPVAAIRVRASRLHGINIPEDLVPLAIDEFPALFIAAACAEGETVLAGAGELRVKESDRIQVMADGLQALGISAQPTADGIIIQGGELQGGEVHSHGDHRCAMAFAMASLVAKGPIIIRDCANVATSFPGFLELACGAGLAIRHGK.

The 3-phosphoshikimate site is built by Lys-32, Ser-33, and Arg-37. Position 32 (Lys-32) interacts with phosphoenolpyruvate. Residues Gly-105 and Arg-133 each contribute to the phosphoenolpyruvate site. 3-phosphoshikimate contacts are provided by Ser-178, Gln-180, Asp-326, and Lys-353. Gln-180 is a binding site for phosphoenolpyruvate. The active-site Proton acceptor is Asp-326. Arg-357 and Arg-398 together coordinate phosphoenolpyruvate.

The protein belongs to the EPSP synthase family. As to quaternary structure, monomer.

The protein resides in the cytoplasm. The enzyme catalyses 3-phosphoshikimate + phosphoenolpyruvate = 5-O-(1-carboxyvinyl)-3-phosphoshikimate + phosphate. It participates in metabolic intermediate biosynthesis; chorismate biosynthesis; chorismate from D-erythrose 4-phosphate and phosphoenolpyruvate: step 6/7. In terms of biological role, catalyzes the transfer of the enolpyruvyl moiety of phosphoenolpyruvate (PEP) to the 5-hydroxyl of shikimate-3-phosphate (S3P) to produce enolpyruvyl shikimate-3-phosphate and inorganic phosphate. In Nitrosococcus oceani (strain ATCC 19707 / BCRC 17464 / JCM 30415 / NCIMB 11848 / C-107), this protein is 3-phosphoshikimate 1-carboxyvinyltransferase.